A 477-amino-acid chain; its full sequence is Glutamate--tRNA ligase (477 aa).

A 'HIGH' region motif is present at residues 8-18; sequence PSPTGTLHIGT. A 'KMSKS' region motif is present at residues 247–251; the sequence is KLSKR. Lys250 contributes to the ATP binding site.

Belongs to the class-I aminoacyl-tRNA synthetase family. Glutamate--tRNA ligase type 1 subfamily. As to quaternary structure, monomer.

It localises to the cytoplasm. It catalyses the reaction tRNA(Glu) + L-glutamate + ATP = L-glutamyl-tRNA(Glu) + AMP + diphosphate. Its function is as follows. Catalyzes the attachment of glutamate to tRNA(Glu) in a two-step reaction: glutamate is first activated by ATP to form Glu-AMP and then transferred to the acceptor end of tRNA(Glu). The polypeptide is Glutamate--tRNA ligase (Synechococcus sp. (strain CC9902)).